Reading from the N-terminus, the 342-residue chain is ATPase asna-1 (342 aa).

26 to 33 (KGGVGKTT) is a binding site for ATP. D55 is a catalytic residue. Residues E243 and N270 each contribute to the ATP site. Residues C285 and C288 each contribute to the Zn(2+) site.

This sequence belongs to the arsA ATPase family. In terms of assembly, homodimer.

It is found in the cytoplasm. The protein resides in the endoplasmic reticulum. ATPase required for the post-translational delivery of tail-anchored (TA) proteins to the endoplasmic reticulum. Recognizes and selectively binds the transmembrane domain of TA proteins in the cytosol. This complex then targets to the endoplasmic reticulum by membrane-bound receptors, where the tail-anchored protein is released for insertion. This process is regulated by ATP binding and hydrolysis. ATP binding drives the homodimer towards the closed dimer state, facilitating recognition of newly synthesized TA membrane proteins. ATP hydrolysis is required for insertion. Subsequently, the homodimer reverts towards the open dimer state, lowering its affinity for the membrane-bound receptor, and returning it to the cytosol to initiate a new round of targeting. May be involved in insulin signaling. This chain is ATPase asna-1, found in Caenorhabditis elegans.